A 292-amino-acid chain; its full sequence is Zinc finger protein OZF (292 aa).

10 consecutive C2H2-type zinc fingers follow at residues 16–38, 44–66, 72–94, 100–122, 128–150, 156–178, 184–206, 212–234, 240–262, and 268–290; these read FACK…EHFH, FECN…QNTH, FECN…QKIH, FECK…QRTH, FVCK…EKIH, FKCS…QNIH, YECN…VRIH, YECN…VRSH, YGCN…LRIH, and YQCS…QKIH. Glycyl lysine isopeptide (Lys-Gly) (interchain with G-Cter in SUMO2) cross-links involve residues lysine 28, lysine 51, and lysine 56. Glycyl lysine isopeptide (Lys-Gly) (interchain with G-Cter in SUMO) cross-links involve residues lysine 157 and lysine 169. Lysine 173 participates in a covalent cross-link: Glycyl lysine isopeptide (Lys-Gly) (interchain with G-Cter in SUMO2). The interval 212–292 is interaction with TERF2IP; it reads YECNVCGKAF…HIRHQKIHTH (81 aa).

This sequence belongs to the krueppel C2H2-type zinc-finger protein family. Binds DNA. Interacts with SUMO conjugating enzyme UBC9/UBE2I. Interacts with the telomeric protein TERF2IP. In terms of processing, sumoylated. Liver, skeletal and heart muscle, mammary cells. Very low levels in brain, lung, placenta and kidney. Strongly overexpressed in many pancreas and colorectal cancers. Increased gene copy numbers are detected in 3 of 12 tumor cell lines and 2 of 12 primary pancreatic carcinomas. Overexpressed in 80% of colorectal cancers.

Its subcellular location is the nucleus. The protein is Zinc finger protein OZF (ZNF146) of Homo sapiens (Human).